Here is a 71-residue protein sequence, read N- to C-terminus: U-scoloptoxin(21)-Sm1a (71 aa).

Residues 1 to 21 form the signal peptide; sequence MKSVIFALFLVYLLIVRAAEA. Residues 45–71 form a disordered region; that stretch reads IELANDPNGPGRRRRAPAENEDFLKHS. Basic and acidic residues predominate over residues 60–71; the sequence is APAENEDFLKHS.

This sequence belongs to the scoloptoxin-21 family. Expressed by the venom gland.

It is found in the secreted. The protein is U-scoloptoxin(21)-Sm1a of Scolopendra morsitans (Tanzanian blue ringleg centipede).